The primary structure comprises 402 residues: Major outer membrane porin (402 aa).

Positions 1-22 (MKKLLKSALLFAATGSALSLQA) are cleaved as a signal peptide.

Belongs to the chlamydial porin (CP) (TC 1.B.2) family. As to quaternary structure, part of a disulfide cross-linked outer membrane complex (COMC) composed of the major outer membrane porin, the small cysteine-rich protein (OmcA) and the large cysteine-rich periplasmic protein (OmcB).

The protein localises to the cell outer membrane. Functionally, in elementary bodies (EBs, the infectious stage, which is able to survive outside the host cell) provides the structural integrity of the outer envelope through disulfide cross-links with the small cysteine-rich protein and the large cysteine-rich periplasmic protein. It has been described in publications as the Sarkosyl-insoluble COMC (Chlamydia outer membrane complex), and serves as the functional equivalent of peptidoglycan. In terms of biological role, permits diffusion of specific solutes through the outer membrane. This Chlamydia psittaci (Chlamydophila psittaci) protein is Major outer membrane porin (ompA).